A 58-amino-acid polypeptide reads, in one-letter code: Large ribosomal subunit protein bL32c (58 aa).

It belongs to the bacterial ribosomal protein bL32 family.

It is found in the plastid. The protein localises to the chloroplast. This Chaetosphaeridium globosum (Charophycean green alga) protein is Large ribosomal subunit protein bL32c.